The sequence spans 369 residues: Anhydro-N-acetylmuramic acid kinase (369 aa).

Residue 12-19 participates in ATP binding; the sequence is GTSLDGVD.

The protein belongs to the anhydro-N-acetylmuramic acid kinase family.

It carries out the reaction 1,6-anhydro-N-acetyl-beta-muramate + ATP + H2O = N-acetyl-D-muramate 6-phosphate + ADP + H(+). It participates in amino-sugar metabolism; 1,6-anhydro-N-acetylmuramate degradation. Its pathway is cell wall biogenesis; peptidoglycan recycling. Its function is as follows. Catalyzes the specific phosphorylation of 1,6-anhydro-N-acetylmuramic acid (anhMurNAc) with the simultaneous cleavage of the 1,6-anhydro ring, generating MurNAc-6-P. Is required for the utilization of anhMurNAc either imported from the medium or derived from its own cell wall murein, and thus plays a role in cell wall recycling. This Shigella boydii serotype 4 (strain Sb227) protein is Anhydro-N-acetylmuramic acid kinase.